The following is a 336-amino-acid chain: Anthranilate phosphoribosyltransferase (336 aa).

Residues Gly-79, 82–83, Thr-87, 89–92, 107–115, and Ala-119 contribute to the 5-phospho-alpha-D-ribose 1-diphosphate site; these read GD, NIST, and KHGNRCVSS. Gly-79 is a binding site for anthranilate. A Mg(2+)-binding site is contributed by Ser-91. Asn-110 contacts anthranilate. Residue Arg-165 participates in anthranilate binding. Mg(2+) is bound by residues Asp-224 and Glu-225.

This sequence belongs to the anthranilate phosphoribosyltransferase family. Homodimer. It depends on Mg(2+) as a cofactor.

The catalysed reaction is N-(5-phospho-beta-D-ribosyl)anthranilate + diphosphate = 5-phospho-alpha-D-ribose 1-diphosphate + anthranilate. It functions in the pathway amino-acid biosynthesis; L-tryptophan biosynthesis; L-tryptophan from chorismate: step 2/5. Catalyzes the transfer of the phosphoribosyl group of 5-phosphorylribose-1-pyrophosphate (PRPP) to anthranilate to yield N-(5'-phosphoribosyl)-anthranilate (PRA). The chain is Anthranilate phosphoribosyltransferase from Lachnoclostridium phytofermentans (strain ATCC 700394 / DSM 18823 / ISDg) (Clostridium phytofermentans).